The following is a 155-amino-acid chain: Snaclec agkicetin-C subunit alpha (155 aa).

An N-terminal signal peptide occupies residues 1–23; the sequence is MGRFIFVSFGLLVVFLSLSGTAA. 3 cysteine pairs are disulfide-bonded: cysteine 25-cysteine 36, cysteine 53-cysteine 149, and cysteine 124-cysteine 141. The C-type lectin domain occupies 32–150; sequence YIRFCYQPFK…CGLKHVFMCK (119 aa).

Belongs to the snaclec family. As to quaternary structure, heterodimer of subunits alpha and beta; disulfide-linked. As to expression, expressed by the venom gland.

The protein localises to the secreted. In terms of biological role, is a potent glycoprotein Ibalpha (GP1BA) antagonist. Concentration-dependently inhibits botrocetin-, ristocetin- and low dose thrombin-induced platelet aggregation. Inhibits platelet adhesion only through inhibiting the vWF interaction with GP1BA, but has minimal effect on other platelet receptors, such as alpha-IIb/beta-3 (ITGA2B/ITGB3) or alpha-2/beta-1 (ITGA2/ITGB1). Causes an instant severe thrombocytopenia in rats and is not lethal to mice. The chain is Snaclec agkicetin-C subunit alpha from Deinagkistrodon acutus (Hundred-pace snake).